Consider the following 97-residue polypeptide: U6-theraphotoxin-Hhn1a 1 (97 aa).

The first 33 residues, Met1–Ala33, serve as a signal peptide directing secretion. Positions Ser34–Arg61 are excised as a propeptide. Disulfide bonds link Cys63–Cys77, Cys70–Cys82, and Cys76–Cys89.

It belongs to the neurotoxin 10 (Hwtx-1) family. 12 (Hntx-12) subfamily. Expressed by the venom gland.

It is found in the secreted. Its function is as follows. Ion channel inhibitor. The protein is U6-theraphotoxin-Hhn1a 1 of Cyriopagopus hainanus (Chinese bird spider).